The following is a 222-amino-acid chain: Peptide methionine sulfoxide reductase MsrA (222 aa).

Residue cysteine 54 is part of the active site.

It belongs to the MsrA Met sulfoxide reductase family.

The catalysed reaction is L-methionyl-[protein] + [thioredoxin]-disulfide + H2O = L-methionyl-(S)-S-oxide-[protein] + [thioredoxin]-dithiol. The enzyme catalyses [thioredoxin]-disulfide + L-methionine + H2O = L-methionine (S)-S-oxide + [thioredoxin]-dithiol. Has an important function as a repair enzyme for proteins that have been inactivated by oxidation. Catalyzes the reversible oxidation-reduction of methionine sulfoxide in proteins to methionine. The sequence is that of Peptide methionine sulfoxide reductase MsrA from Methylococcus capsulatus (strain ATCC 33009 / NCIMB 11132 / Bath).